The chain runs to 523 residues: Asparagine--tRNA ligase (523 aa).

The interval 329 to 350 (SARGDTPLAARSTARTPPVRTP) is disordered.

It belongs to the class-II aminoacyl-tRNA synthetase family. In terms of assembly, homodimer.

It is found in the cytoplasm. The catalysed reaction is tRNA(Asn) + L-asparagine + ATP = L-asparaginyl-tRNA(Asn) + AMP + diphosphate + H(+). This Treponema pallidum (strain Nichols) protein is Asparagine--tRNA ligase.